Consider the following 143-residue polypeptide: Acetyltransferase plu1384 (143 aa).

In terms of domain architecture, N-acetyltransferase spans 1 to 138 (MEIRVFRQDD…ESVIFSKRLI (138 aa)).

It belongs to the acetyltransferase family. YpeA subfamily.

The chain is Acetyltransferase plu1384 from Photorhabdus laumondii subsp. laumondii (strain DSM 15139 / CIP 105565 / TT01) (Photorhabdus luminescens subsp. laumondii).